The sequence spans 85 residues: Large ribosomal subunit protein bL27 (85 aa).

Residues 1 to 10 (MAQKKGGGST) show a composition bias toward gly residues. The segment at 1–20 (MAQKKGGGSTRNGRDSKPKM) is disordered.

Belongs to the bacterial ribosomal protein bL27 family.

This is Large ribosomal subunit protein bL27 from Acidovorax ebreus (strain TPSY) (Diaphorobacter sp. (strain TPSY)).